A 235-amino-acid chain; its full sequence is Regulator of G-protein signaling 18 (235 aa).

Residue serine 49 is modified to Phosphoserine. An RGS domain is found at 86–202 (SFDKLLSHRD…LKSETYLHLI (117 aa)). Serine 216 and serine 218 each carry phosphoserine.

In terms of tissue distribution, expressed in bone marrow, spleen, fetal liver and lung. At very low levels expressed in heart.

The protein localises to the cytoplasm. Inhibits signal transduction by increasing the GTPase activity of G protein alpha subunits thereby driving them into their inactive GDP-bound form. Binds to G(i) alpha-1, G(i) alpha-2, G(i) alpha-3 and G(q) alpha. This is Regulator of G-protein signaling 18 (Rgs18) from Mus musculus (Mouse).